A 620-amino-acid polypeptide reads, in one-letter code: NADPH-dependent diflavin oxidoreductase 1 (620 aa).

One can recognise a Flavodoxin-like domain in the interval 6–168 (IAILYGSETG…VYSEFEKRVL (163 aa)). Residues 12 to 17 (SETGTA), 59 to 62 (STTG), and 106 to 115 (LGDSSYSKFN) each bind FMN. Residues 222-475 (SSVKYGTVVT…LLPAGKQDRP (254 aa)) enclose the FAD-binding FR-type domain. FAD is bound by residues R380, 410 to 413 (RFFS), and 442 to 445 (GLCT). 535–536 (SR) is an NADP(+) binding site. Position 620 (W620) interacts with FAD.

It belongs to the NADPH-dependent diflavin oxidoreductase NDOR1 family. The protein in the N-terminal section; belongs to the flavodoxin family. This sequence in the C-terminal section; belongs to the flavoprotein pyridine nucleotide cytochrome reductase family. Interacts with DRE2; as part of the cytosolic iron-sulfur (Fe-S) protein assembly (CIA) machinery. It depends on FAD as a cofactor. FMN is required as a cofactor.

It localises to the cytoplasm. It is found in the mitochondrion. It catalyses the reaction 2 oxidized [2Fe-2S]-[protein] + NADPH = 2 reduced [2Fe-2S]-[protein] + NADP(+) + H(+). NADPH-dependent reductase which is a central component of the cytosolic iron-sulfur (Fe-S) protein assembly (CIA) machinery. Transfers electrons from NADPH via its FAD and FMN prosthetic groups to the [2Fe-2S] cluster of DRE2, another key component of the CIA machinery. In turn, this reduced cluster provides electrons for assembly of cytosolic iron-sulfur cluster proteins. Positively controls H(2)O(2)-induced cell death. In Eremothecium gossypii (strain ATCC 10895 / CBS 109.51 / FGSC 9923 / NRRL Y-1056) (Yeast), this protein is NADPH-dependent diflavin oxidoreductase 1.